The chain runs to 230 residues: Ropporin-1-like protein (230 aa).

In terms of domain architecture, RIIa spans 17 to 46 (PELPDILKQFTKAAIRTQPADVLRWSAGYF).

It belongs to the ropporin family. As to quaternary structure, component of the axonemal radial spoke complex 1 (RS1), at least composed of spoke head proteins RSPH1, RSPH3, RSPH9 and the cilia-specific component RSPH4A or sperm-specific component RSPH6A, spoke stalk proteins RSPH14, DNAJB13, DYDC1, ROPN1L and NME5, and the anchor protein IQUB. Interacts with FSCB; the interaction increases upon spermatozoa capacitation conditions. May interact with AKAP3. Interacts with CFAP61. Sumoylated, sumoylation decreases upon spermatozoa capacitation conditions.

It localises to the cell projection. Its subcellular location is the cilium. It is found in the flagellum. Its function is as follows. Functions as part of axonemal radial spoke complexes that play an important part in the motility of sperm and cilia. Important for male fertility. With ROPN1, involved in fibrous sheath integrity and sperm motility, plays a role in PKA-dependent signaling processes required for spermatozoa capacitation. This chain is Ropporin-1-like protein (ROPN1L), found in Homo sapiens (Human).